The chain runs to 633 residues: Phosphomethylpyrimidine synthase (633 aa).

Substrate is bound by residues Asn245, Met274, Tyr303, His339, Ser359–Gly361, Asp400–Arg403, and Glu439. His443 is a binding site for Zn(2+). Tyr466 is a binding site for substrate. His507 contacts Zn(2+). 3 residues coordinate [4Fe-4S] cluster: Cys587, Cys590, and Cys595.

Belongs to the ThiC family. In terms of assembly, homodimer. Requires [4Fe-4S] cluster as cofactor.

It carries out the reaction 5-amino-1-(5-phospho-beta-D-ribosyl)imidazole + S-adenosyl-L-methionine = 4-amino-2-methyl-5-(phosphooxymethyl)pyrimidine + CO + 5'-deoxyadenosine + formate + L-methionine + 3 H(+). Its pathway is cofactor biosynthesis; thiamine diphosphate biosynthesis. Functionally, catalyzes the synthesis of the hydroxymethylpyrimidine phosphate (HMP-P) moiety of thiamine from aminoimidazole ribotide (AIR) in a radical S-adenosyl-L-methionine (SAM)-dependent reaction. The protein is Phosphomethylpyrimidine synthase of Neisseria meningitidis serogroup C (strain 053442).